The primary structure comprises 225 residues: 7-cyano-7-deazaguanine synthase (225 aa).

10-20 (VSGGLDSTTVI) is a binding site for ATP. The Zn(2+) site is built by Cys189, Cys199, Cys202, and Cys205.

The protein belongs to the QueC family. Zn(2+) is required as a cofactor.

The enzyme catalyses 7-carboxy-7-deazaguanine + NH4(+) + ATP = 7-cyano-7-deazaguanine + ADP + phosphate + H2O + H(+). It functions in the pathway purine metabolism; 7-cyano-7-deazaguanine biosynthesis. Functionally, catalyzes the ATP-dependent conversion of 7-carboxy-7-deazaguanine (CDG) to 7-cyano-7-deazaguanine (preQ(0)). In Cellvibrio japonicus (strain Ueda107) (Pseudomonas fluorescens subsp. cellulosa), this protein is 7-cyano-7-deazaguanine synthase.